Here is a 320-residue protein sequence, read N- to C-terminus: tRNA U34 carboxymethyltransferase (320 aa).

Carboxy-S-adenosyl-L-methionine-binding positions include lysine 89, tryptophan 103, lysine 108, glycine 127, 177–178 (LE), methionine 193, tyrosine 197, and arginine 312.

Belongs to the class I-like SAM-binding methyltransferase superfamily. CmoB family. Homotetramer.

The catalysed reaction is carboxy-S-adenosyl-L-methionine + 5-hydroxyuridine(34) in tRNA = 5-carboxymethoxyuridine(34) in tRNA + S-adenosyl-L-homocysteine + H(+). Catalyzes carboxymethyl transfer from carboxy-S-adenosyl-L-methionine (Cx-SAM) to 5-hydroxyuridine (ho5U) to form 5-carboxymethoxyuridine (cmo5U) at position 34 in tRNAs. This Stutzerimonas stutzeri (strain A1501) (Pseudomonas stutzeri) protein is tRNA U34 carboxymethyltransferase.